Here is a 114-residue protein sequence, read N- to C-terminus: DNA-directed RNA polymerase subunit omega (114 aa).

Belongs to the RNA polymerase subunit omega family. In terms of assembly, the RNAP catalytic core consists of 2 alpha, 1 beta, 1 beta' and 1 omega subunit. When a sigma factor is associated with the core the holoenzyme is formed, which can initiate transcription.

It carries out the reaction RNA(n) + a ribonucleoside 5'-triphosphate = RNA(n+1) + diphosphate. In terms of biological role, promotes RNA polymerase assembly. Latches the N- and C-terminal regions of the beta' subunit thereby facilitating its interaction with the beta and alpha subunits. The polypeptide is DNA-directed RNA polymerase subunit omega (Erythrobacter litoralis (strain HTCC2594)).